The sequence spans 319 residues: ATP-dependent 6-phosphofructokinase (319 aa).

Glycine 11 contacts ATP. Residue arginine 21–arginine 25 participates in ADP binding. Residues arginine 72–tyrosine 73 and glycine 102–serine 105 contribute to the ATP site. Aspartate 103 is a binding site for Mg(2+). Residue threonine 125 to aspartate 127 participates in substrate binding. Catalysis depends on aspartate 127, which acts as the Proton acceptor. ADP is bound at residue arginine 154. Residues arginine 162 and methionine 169–arginine 171 each bind substrate. Residues glycine 185–glutamate 187, arginine 211, and lysine 213–histidine 215 contribute to the ADP site. Residues glutamate 222, arginine 243, and histidine 249–arginine 252 contribute to the substrate site.

The protein belongs to the phosphofructokinase type A (PFKA) family. ATP-dependent PFK group I subfamily. Prokaryotic clade 'B1' sub-subfamily. In terms of assembly, homotetramer. Requires Mg(2+) as cofactor.

It localises to the cytoplasm. It carries out the reaction beta-D-fructose 6-phosphate + ATP = beta-D-fructose 1,6-bisphosphate + ADP + H(+). It participates in carbohydrate degradation; glycolysis; D-glyceraldehyde 3-phosphate and glycerone phosphate from D-glucose: step 3/4. Allosterically activated by ADP and other diphosphonucleosides, and allosterically inhibited by phosphoenolpyruvate. Its function is as follows. Catalyzes the phosphorylation of D-fructose 6-phosphate to fructose 1,6-bisphosphate by ATP, the first committing step of glycolysis. This Listeria monocytogenes serotype 4a (strain HCC23) protein is ATP-dependent 6-phosphofructokinase.